A 2032-amino-acid polypeptide reads, in one-letter code: Transient receptor potential channel (2032 aa).

The span at 129–139 (KKTRKHRRRRS) shows a compositional bias: basic residues. 5 disordered regions span residues 129–162 (KKTRKHRRRRSGSFTGGVYPRKGHRNRSLLGHAI), 197–223 (QSKGGDQVPPTSTTTGGAGGDGNAVPT), 831–860 (KKAMGVFSSRPSRTGSGIASRQSTEGMGGV), 912–945 (ANPMRPPNLGDSRDCGSEFDEELSLTSASDGSQT), and 1120–1211 (AAEH…EAGN). Composition is skewed to polar residues over residues 839 to 855 (SRPSRTGSGIASRQSTE), 935 to 945 (SLTSASDGSQT), and 1120 to 1129 (AAEHQNDMNY). Low complexity predominate over residues 1130–1149 (SSSSSSSSSSSSSSSSSDSS). Polar residues predominate over residues 1171 to 1185 (TSQGSAQSLNITSLF). A run of 5 helical transmembrane segments spans residues 1310-1330 (FWSWTISFILFITFFTYTLLV), 1332-1352 (TPPRPTVIEYILIAYVAAFGL), 1374-1394 (VCSFWNCVTILAIIFYIVGFF), 1439-1459 (MIQNMSYIIVMLVVTLLSFGL), and 1535-1555 (LMTFFLLIANILLMSMLIAIF). 4 disordered regions span residues 1753-1779 (GTDPILEEKDHDSGENSNSLPPGRIRR), 1853-1909 (HPER…SRDQ), 1935-1982 (EEED…EEVD), and 1999-2032 (LNEEEQAGAPHSTPVIASPSSSRADLTSQKCSDV). The span at 1935 to 1947 (EEEDEEEDDEEDD) shows a compositional bias: acidic residues. Residues 1951–1962 (RHHIHPRRKSSR) show a composition bias toward basic residues. A compositionally biased stretch (polar residues) spans 2016–2032 (SPSSSRADLTSQKCSDV).

The protein belongs to the transient receptor (TC 1.A.4) family. LTrpC subfamily. Gonads.

It is found in the membrane. Required for initiation and continuation of postembryonic mitotic cell divisions of gonadal cells Z1 and Z4. Zygotic expression is necessary for hermaphrodite fertility. May be a cation channel. This Caenorhabditis elegans protein is Transient receptor potential channel (gon-2).